The sequence spans 85 residues: Putative defensin-like protein 142 (85 aa).

The N-terminal stretch at M1 to P24 is a signal peptide. Disulfide bonds link C30–C78, C41–C63, C46–C73, and C50–C75.

It belongs to the DEFL family.

It is found in the secreted. This is Putative defensin-like protein 142 (LCR34) from Arabidopsis thaliana (Mouse-ear cress).